Here is a 131-residue protein sequence, read N- to C-terminus: Small ribosomal subunit protein uS8 (131 aa).

It belongs to the universal ribosomal protein uS8 family. In terms of assembly, part of the 30S ribosomal subunit. Contacts proteins S5 and S12.

Its function is as follows. One of the primary rRNA binding proteins, it binds directly to 16S rRNA central domain where it helps coordinate assembly of the platform of the 30S subunit. This Thermodesulfovibrio yellowstonii (strain ATCC 51303 / DSM 11347 / YP87) protein is Small ribosomal subunit protein uS8.